The primary structure comprises 316 residues: Coproporphyrin III ferrochelatase (316 aa).

Residues Tyr13, Arg30, 46–47 (RY), Ser54, and Tyr125 each bind Fe-coproporphyrin III. Residues His183 and Glu264 each coordinate Fe(2+).

Belongs to the ferrochelatase family.

The protein resides in the cytoplasm. It catalyses the reaction Fe-coproporphyrin III + 2 H(+) = coproporphyrin III + Fe(2+). Its pathway is porphyrin-containing compound metabolism; protoheme biosynthesis. Its function is as follows. Involved in coproporphyrin-dependent heme b biosynthesis. Catalyzes the insertion of ferrous iron into coproporphyrin III to form Fe-coproporphyrin III. This is Coproporphyrin III ferrochelatase from Geobacillus thermodenitrificans (strain NG80-2).